The following is a 389-amino-acid chain: Galactokinase (389 aa).

33-36 (EHTD) contributes to the substrate binding site. Residues S67 and 124-130 (GAGLSSS) each bind ATP. Residues S130 and E162 each coordinate Mg(2+). Residue D174 is the Proton acceptor of the active site. Y224 is a binding site for substrate.

Belongs to the GHMP kinase family. GalK subfamily.

It is found in the cytoplasm. The catalysed reaction is alpha-D-galactose + ATP = alpha-D-galactose 1-phosphate + ADP + H(+). The protein operates within carbohydrate metabolism; galactose metabolism. Catalyzes the transfer of the gamma-phosphate of ATP to D-galactose to form alpha-D-galactose-1-phosphate (Gal-1-P). The polypeptide is Galactokinase (Fusobacterium nucleatum subsp. nucleatum (strain ATCC 25586 / DSM 15643 / BCRC 10681 / CIP 101130 / JCM 8532 / KCTC 2640 / LMG 13131 / VPI 4355)).